The chain runs to 265 residues: Type III pantothenate kinase (265 aa).

Residue 17 to 24 (DIGNTSIS) participates in ATP binding. 114–117 (GSDV) contributes to the substrate binding site. Residue Asp116 is the Proton acceptor of the active site. Asp137 serves as a coordination point for K(+). Thr140 contacts ATP. Residue Thr192 participates in substrate binding.

This sequence belongs to the type III pantothenate kinase family. As to quaternary structure, homodimer. NH4(+) is required as a cofactor. K(+) serves as cofactor.

Its subcellular location is the cytoplasm. It carries out the reaction (R)-pantothenate + ATP = (R)-4'-phosphopantothenate + ADP + H(+). Its pathway is cofactor biosynthesis; coenzyme A biosynthesis; CoA from (R)-pantothenate: step 1/5. Catalyzes the phosphorylation of pantothenate (Pan), the first step in CoA biosynthesis. In Borrelia hermsii (strain HS1 / DAH), this protein is Type III pantothenate kinase.